The chain runs to 144 residues: Putative HTH-type transcriptional regulator aq_268 (144 aa).

The 132-residue stretch at 2–133 (IFSDTVRYAL…KGTTIKDLIN (132 aa)) folds into the HTH rrf2-type domain.

This Aquifex aeolicus (strain VF5) protein is Putative HTH-type transcriptional regulator aq_268.